We begin with the raw amino-acid sequence, 350 residues long: Deoxyhypusine synthase-like protein (350 aa).

Belongs to the deoxyhypusine synthase family.

The sequence is that of Deoxyhypusine synthase-like protein from Chlorobaculum parvum (strain DSM 263 / NCIMB 8327) (Chlorobium vibrioforme subsp. thiosulfatophilum).